Here is a 270-residue protein sequence, read N- to C-terminus: Formamidopyrimidine-DNA glycosylase (270 aa).

The Schiff-base intermediate with DNA role is filled by Pro2. Glu3 (proton donor) is an active-site residue. Lys58 functions as the Proton donor; for beta-elimination activity in the catalytic mechanism. Positions 91, 110, and 151 each coordinate DNA. Residues 236-270 (FVYGRGGQPCKVCGTALREVKLGQRASVYCPRCQR) form an FPG-type zinc finger. Arg260 (proton donor; for delta-elimination activity) is an active-site residue.

It belongs to the FPG family. As to quaternary structure, monomer. Zn(2+) serves as cofactor.

It catalyses the reaction Hydrolysis of DNA containing ring-opened 7-methylguanine residues, releasing 2,6-diamino-4-hydroxy-5-(N-methyl)formamidopyrimidine.. The catalysed reaction is 2'-deoxyribonucleotide-(2'-deoxyribose 5'-phosphate)-2'-deoxyribonucleotide-DNA = a 3'-end 2'-deoxyribonucleotide-(2,3-dehydro-2,3-deoxyribose 5'-phosphate)-DNA + a 5'-end 5'-phospho-2'-deoxyribonucleoside-DNA + H(+). Involved in base excision repair of DNA damaged by oxidation or by mutagenic agents. Acts as a DNA glycosylase that recognizes and removes damaged bases. Has a preference for oxidized purines, such as 7,8-dihydro-8-oxoguanine (8-oxoG). Has AP (apurinic/apyrimidinic) lyase activity and introduces nicks in the DNA strand. Cleaves the DNA backbone by beta-delta elimination to generate a single-strand break at the site of the removed base with both 3'- and 5'-phosphates. This Pseudomonas putida (strain GB-1) protein is Formamidopyrimidine-DNA glycosylase.